The following is a 273-amino-acid chain: Ribosomal RNA small subunit methyltransferase A (273 aa).

Asn-18, Leu-20, Gly-45, Glu-66, Asp-91, and Asn-113 together coordinate S-adenosyl-L-methionine.

This sequence belongs to the class I-like SAM-binding methyltransferase superfamily. rRNA adenine N(6)-methyltransferase family. RsmA subfamily.

Its subcellular location is the cytoplasm. It carries out the reaction adenosine(1518)/adenosine(1519) in 16S rRNA + 4 S-adenosyl-L-methionine = N(6)-dimethyladenosine(1518)/N(6)-dimethyladenosine(1519) in 16S rRNA + 4 S-adenosyl-L-homocysteine + 4 H(+). In terms of biological role, specifically dimethylates two adjacent adenosines (A1518 and A1519) in the loop of a conserved hairpin near the 3'-end of 16S rRNA in the 30S particle. May play a critical role in biogenesis of 30S subunits. The sequence is that of Ribosomal RNA small subunit methyltransferase A from Erwinia tasmaniensis (strain DSM 17950 / CFBP 7177 / CIP 109463 / NCPPB 4357 / Et1/99).